We begin with the raw amino-acid sequence, 198 residues long: MRLSSTNMQARKMLFAAILSICASSSKKISIYNEEMIVALCFIGFIIFSWKSLGKTFKVTLDGRIQAIQEESQQFPNPNEVVPPESNEQQRLLRISLRICGTVVESLPMARCAPKCEKTVQALLCRNLNVKSATLPNATSSRRIRLQDDIAIKMHVLVGKRFCPWCSSKAERVEFIRESLVVLRMVWVGDSLKNKELE.

A helical membrane pass occupies residues 29–49; sequence ISIYNEEMIVALCFIGFIIFS.

Belongs to the ATPase protein MI25 family. In terms of assembly, F-type ATPases have 2 components, CF(1) - the catalytic core - and CF(0) - the membrane proton channel. CF(1) has five subunits: alpha(3), beta(3), gamma(1), delta(1), epsilon(1). CF(0) has three main subunits: a, b and c.

Its subcellular location is the mitochondrion membrane. This is one of the chains of the nonenzymatic component (CF(0) subunit) of the mitochondrial ATPase complex. This chain is ATP synthase protein MI25, found in Nicotiana tabacum (Common tobacco).